The chain runs to 284 residues: Putative ABC transporter ATP-binding protein tll2439 (284 aa).

An ABC transporter domain is found at 6 to 242 (LEFHQVGFRY…WPTFAPELGT (237 aa)). 40 to 47 (GLNGSGKS) contacts ATP.

It belongs to the ABC transporter superfamily.

The protein localises to the cell inner membrane. Functionally, probably part of an ABC transporter complex. Responsible for energy coupling to the transport system. The protein is Putative ABC transporter ATP-binding protein tll2439 of Thermosynechococcus vestitus (strain NIES-2133 / IAM M-273 / BP-1).